The following is an 825-amino-acid chain: Glycerol-3-phosphate acyltransferase 1, mitochondrial (825 aa).

Residues 1–87 (MDESALTLGT…FFNPSIPSLG (87 aa)) lie on the Cytoplasmic side of the membrane. Residues 80–120 (NPSIPSLGLRNVIYINETHTRHRGWLARRLSYVLFIQERDV) form an important for mitochondrial localization region. Residues 88–118 (LRNVIYINETHTRHRGWLARRLSYVLFIQER) lie within the membrane without spanning it. Topologically, residues 119 to 825 (DVHKGMFATN…LEYILSLVVL (707 aa)) are cytoplasmic. The short motif at 230 to 235 (HRSHID) is the HXXXXD motif element. CoA is bound by residues R278, R279, K288, R293, and R328. Residue S380 is modified to Phosphoserine. The segment at 435–455 (SRPSGAADEGTDMSINESRNA) is disordered. R461 is a CoA binding site. Residues S685 and S692 each carry the phosphoserine modification. An N6-acetyllysine mark is found at K777 and K781.

Belongs to the GPAT/DAPAT family. As to expression, highly expressed in adipose tissues and lung. Low expression in liver.

It is found in the mitochondrion outer membrane. The catalysed reaction is sn-glycerol 3-phosphate + an acyl-CoA = a 1-acyl-sn-glycero-3-phosphate + CoA. It carries out the reaction (9Z,12Z)-octadecadienoyl-CoA + sn-glycerol 3-phosphate = 1-(9Z,12Z)-octadecadienoyl-sn-glycero-3-phosphate + CoA. The enzyme catalyses sn-glycerol 3-phosphate + (9Z)-octadecenoyl-CoA = 1-(9Z-octadecenoyl)-sn-glycero-3-phosphate + CoA. It catalyses the reaction sn-glycerol 3-phosphate + octadecanoyl-CoA = 1-octadecanoyl-sn-glycero-3-phosphate + CoA. The catalysed reaction is sn-glycerol 3-phosphate + hexadecanoyl-CoA = 1-hexadecanoyl-sn-glycero-3-phosphate + CoA. It carries out the reaction dodecanoyl-CoA + sn-glycerol 3-phosphate = 1-dodecanoyl-sn-glycerol 3-phosphate + CoA. The enzyme catalyses 1-acyl-sn-glycero-3-phospho-(1'-sn-glycerol) + an acyl-CoA = a 1,2-diacyl-sn-glycero-3-phospho-(1'-sn-glycerol) + CoA. The protein operates within phospholipid metabolism; CDP-diacylglycerol biosynthesis; CDP-diacylglycerol from sn-glycerol 3-phosphate: step 1/3. Its function is as follows. Mitochondrial membrane protein that catalyzes the essential first step of biosynthesis of glycerolipids such as triglycerides, phosphatidic acids and lysophosphatidic acids. Esterifies acyl-group from acyl-coenzyme A (acyl-CoA) to the sn-1 position of glycerol-3-phosphate, to produce lysophosphatidic acid. Has a narrow hydrophobic binding cleft that selects for a linear acyl chain. Catalytic activity is higher for substrates with a 16-carbon acyl chain. The protein is Glycerol-3-phosphate acyltransferase 1, mitochondrial of Bos taurus (Bovine).